The chain runs to 620 residues: Long-chain fatty acid transport protein 2 (620 aa).

At 1 to 4 (MLPV) the chain is on the lumenal side. The chain crosses the membrane as a helical span at residues 5 to 27 (LYTGLAGLLLLPLLLTCCCPYLL). The Cytoplasmic portion of the chain corresponds to 28 to 106 (QDVRFFLQLA…DHLGLRQGDC (79 aa)). A helical membrane pass occupies residues 107–127 (VALFMGNEPAYVWLWLGLLKL). Residues 128–267 (GCPMACLNYN…DVIYTTMPLY (140 aa)) lie on the Lumenal side of the membrane. 222 to 233 (YIYTSGTTGLPK) is an AMP binding site. The chain crosses the membrane as a helical span at residues 268–288 (HSAALMIGLHGCIVVGATFAL). At 289–620 (RSKFSASQFW…NAIIDKTLKL (332 aa)) the chain is on the cytoplasmic side. Position 291 is an N6-acetyllysine (Lys291). Thr577 is subject to Phosphothreonine.

Belongs to the ATP-dependent AMP-binding enzyme family. As to expression, liver and kidney (at protein level).

Its subcellular location is the endoplasmic reticulum membrane. The protein resides in the peroxisome membrane. The protein localises to the cell membrane. It is found in the microsome. The catalysed reaction is a fatty acid(in) = a fatty acid(out). The enzyme catalyses (9Z)-octadecenoate(out) = (9Z)-octadecenoate(in). It catalyses the reaction a long-chain fatty acid + ATP + CoA = a long-chain fatty acyl-CoA + AMP + diphosphate. It carries out the reaction (5Z,8Z,11Z,14Z)-eicosatetraenoate + ATP + CoA = (5Z,8Z,11Z,14Z)-eicosatetraenoyl-CoA + AMP + diphosphate. The catalysed reaction is (9Z,12Z,15Z)-octadecatrienoate + ATP + CoA = (9Z,12Z,15Z)-octadecatrienoyl-CoA + AMP + diphosphate. The enzyme catalyses hexadecanoate + ATP + CoA = hexadecanoyl-CoA + AMP + diphosphate. It catalyses the reaction (9Z)-octadecenoate + ATP + CoA = (9Z)-octadecenoyl-CoA + AMP + diphosphate. It carries out the reaction 2,6,10,14-tetramethylpentadecanoate + ATP + CoA = pristanoyl-CoA + AMP + diphosphate. The catalysed reaction is (E)-hexadec-2-enoate + ATP + CoA = (2E)-hexadecenoyl-CoA + AMP + diphosphate. The enzyme catalyses 3,7,11,15-tetramethylhexadecanoate + ATP + CoA = phytanoyl-CoA + AMP + diphosphate. It catalyses the reaction a very long-chain fatty acid + ATP + CoA = a very long-chain fatty acyl-CoA + AMP + diphosphate. It carries out the reaction tetracosanoate + ATP + CoA = tetracosanoyl-CoA + AMP + diphosphate. The catalysed reaction is (4Z,7Z,10Z,13Z,16Z,19Z)-docosahexaenoate + ATP + CoA = (4Z,7Z,10Z,13Z,16Z,19Z)-docosahexaenoyl-CoA + AMP + diphosphate. The enzyme catalyses (25R)-3alpha,7alpha,12alpha-trihydroxy-5beta-cholestan-26-oate + ATP + CoA = (25R)-3alpha,7alpha,12alpha-trihydroxy-5beta-cholestan-26-oyl-CoA + AMP + diphosphate. Its function is as follows. Mediates the import of long-chain fatty acids (LCFA) into the cell by facilitating their transport across cell membranes, playing an important role in hepatic fatty acid uptake. Also functions as an acyl-CoA ligase catalyzing the ATP-dependent formation of fatty acyl-CoA using LCFA and very-long-chain fatty acids (VLCFA) as substrates, which prevents fatty acid efflux from cells and might drive more fatty acid uptake. Plays a pivotal role in regulating available LCFA substrates from exogenous sources in tissues undergoing high levels of beta-oxidation or triglyceride synthesis. Can also activate branched-chain fatty acids such as phytanic acid and pristanic acid. May contribute to the synthesis of sphingosine-1-phosphate. Does not activate C24 bile acids, cholate and chenodeoxycholate. In vitro, activates 3-alpha,7-alpha,12-alpha-trihydroxy-5-beta-cholestanate (THCA), the C27 precursor of cholic acid deriving from the de novo synthesis from cholesterol. However, it is not critical for THCA activation and bile synthesis in vivo. The polypeptide is Long-chain fatty acid transport protein 2 (Slc27a2) (Rattus norvegicus (Rat)).